Consider the following 382-residue polypeptide: Chaperone protein DnaJ (382 aa).

In terms of domain architecture, J spans 5–70; that stretch reads DYYEVLGVSR…DKKAAYDRYG (66 aa). The CR-type zinc finger occupies 141–219; it reads GVQKTINVPA…CHGAGRVEKE (79 aa). Zn(2+)-binding residues include C154, C157, C171, C174, C193, C196, C207, and C210. CXXCXGXG motif repeat units follow at residues 154–161, 171–178, 193–200, and 207–214; these read CDACKGTG, CPTCSGMG, CPTCNGMG, and CKVCHGAG.

This sequence belongs to the DnaJ family. In terms of assembly, homodimer. It depends on Zn(2+) as a cofactor.

It is found in the cytoplasm. In terms of biological role, participates actively in the response to hyperosmotic and heat shock by preventing the aggregation of stress-denatured proteins and by disaggregating proteins, also in an autonomous, DnaK-independent fashion. Unfolded proteins bind initially to DnaJ; upon interaction with the DnaJ-bound protein, DnaK hydrolyzes its bound ATP, resulting in the formation of a stable complex. GrpE releases ADP from DnaK; ATP binding to DnaK triggers the release of the substrate protein, thus completing the reaction cycle. Several rounds of ATP-dependent interactions between DnaJ, DnaK and GrpE are required for fully efficient folding. Also involved, together with DnaK and GrpE, in the DNA replication of plasmids through activation of initiation proteins. In Cereibacter sphaeroides (strain ATCC 17029 / ATH 2.4.9) (Rhodobacter sphaeroides), this protein is Chaperone protein DnaJ.